The sequence spans 399 residues: Unsaturated chondroitin disaccharide hydrolase (399 aa).

Asp116 (nucleophile) is an active-site residue. Substrate contacts are provided by Asp116, Asp176, Gly234, Thr236, Arg248, Trp252, Ser366, and Ser369. The active-site Proton donor is the Asp176.

This sequence belongs to the glycosyl hydrolase 88 family. Monomer.

The enzyme catalyses beta-D-4-deoxy-Delta(4)-GlcpA-(1-&gt;3)-beta-D-GalpNAc6S + H2O = N-acetyl-beta-D-galactosamine 6-sulfate + 5-dehydro-4-deoxy-D-glucuronate. Functionally, catalyzes the hydrolysis of unsaturated hyaluronate and chondroitin disaccharides. Also degrades unsaturated heparin disaccharides. Releases 4-deoxy-4,5-didehydro D-glucuronic acid or 4-deoxy-4,5-didehydro L-iduronic acid from chondroitin disaccharides, hyaluronan disaccharides and heparin disaccharides and cleaves both glycosidic (1-&gt;3) and (1-&gt;4) bonds. Prefers sulfated glycosaminoglycans compared to unsulfated glycosaminoglycans. Probably required for mammalian cells invasion through the degradation of extracellular sulfated glycosaminoglycans such as chondroitin and hyaluronan. This chain is Unsaturated chondroitin disaccharide hydrolase (ugl), found in Streptococcus pyogenes serotype M1.